Consider the following 252-residue polypeptide: Triosephosphate isomerase (252 aa).

10 to 12 (NWK) contacts substrate. The Electrophile role is filled by His-96. Residue Glu-168 is the Proton acceptor of the active site. Substrate-binding positions include Gly-174, Ser-214, and 235–236 (GG).

The protein belongs to the triosephosphate isomerase family. In terms of assembly, homodimer.

It is found in the cytoplasm. It catalyses the reaction D-glyceraldehyde 3-phosphate = dihydroxyacetone phosphate. Its pathway is carbohydrate biosynthesis; gluconeogenesis. It functions in the pathway carbohydrate degradation; glycolysis; D-glyceraldehyde 3-phosphate from glycerone phosphate: step 1/1. Its function is as follows. Involved in the gluconeogenesis. Catalyzes stereospecifically the conversion of dihydroxyacetone phosphate (DHAP) to D-glyceraldehyde-3-phosphate (G3P). The polypeptide is Triosephosphate isomerase (Streptococcus agalactiae serotype Ia (strain ATCC 27591 / A909 / CDC SS700)).